Here is a 516-residue protein sequence, read N- to C-terminus: Nondiscriminating glutamyl-tRNA synthetase EARS2, mitochondrial (516 aa).

The N-terminal 39 residues, 1–39 (MRPAFIRGKWLSRTLELATGLGRRTCSSRESGREVRVRF), are a transit peptide targeting the mitochondrion. Residue 38–40 (RFA) coordinates L-glutamate. A 'HIGH' region motif is present at residues 43–51 (PTGFLHLGG). Histidine 48 is a binding site for ATP. Residues glutamate 74, 226–230 (YHLAN), and arginine 244 contribute to the L-glutamate site. ATP-binding positions include glutamate 247 and 282 to 286 (KLSKR). Positions 282-286 (KLSKR) match the 'KMSKS' region motif.

The protein belongs to the class-I aminoacyl-tRNA synthetase family. Glutamate--tRNA ligase type 1 subfamily.

It is found in the mitochondrion matrix. It catalyses the reaction tRNA(Glx) + L-glutamate + ATP = L-glutamyl-tRNA(Glx) + AMP + diphosphate. The catalysed reaction is tRNA(Glu) + L-glutamate + ATP = L-glutamyl-tRNA(Glu) + AMP + diphosphate. It carries out the reaction tRNA(Gln) + L-glutamate + ATP = L-glutamyl-tRNA(Gln) + AMP + diphosphate. Functionally, non-discriminating glutamyl-tRNA synthetase that catalyzes aminoacylation of both mitochondrial tRNA(Glu) and tRNA(Gln) and participates in RNA aminoacylation for mitochondrial protein translation. Attachs glutamate to tRNA(Glu) or tRNA(Gln) in a two-step reaction: glutamate is first activated by ATP to form Glu-AMP and then transferred to the acceptor end of tRNA(Glu) or tRNA(Gln). The protein is Nondiscriminating glutamyl-tRNA synthetase EARS2, mitochondrial of Xenopus tropicalis (Western clawed frog).